A 228-amino-acid polypeptide reads, in one-letter code: Potassium/proton antiporter CemA (228 aa).

3 consecutive transmembrane segments (helical) span residues 6-26, 113-133, and 188-208; these read FIPL…SFSF, IICF…LFIL, and IISG…KYWI.

The protein belongs to the CemA family.

The protein resides in the plastid. Its subcellular location is the chloroplast inner membrane. It catalyses the reaction K(+)(in) + H(+)(out) = K(+)(out) + H(+)(in). Functionally, contributes to K(+)/H(+) antiport activity by supporting proton efflux to control proton extrusion and homeostasis in chloroplasts in a light-dependent manner to modulate photosynthesis. Prevents excessive induction of non-photochemical quenching (NPQ) under continuous-light conditions. Indirectly promotes efficient inorganic carbon uptake into chloroplasts. The sequence is that of Potassium/proton antiporter CemA from Populus alba (White poplar).